The primary structure comprises 433 residues: Probable carboxypeptidase ATEG_02905 (433 aa).

A signal peptide spans 1-18; the sequence is MKSAISLLLASAATYVGA. The segment at 20–40 is disordered; it reads PHPEPPQLVLSPSTSTGVHGD. N-linked (GlcNAc...) asparagine glycosylation is present at N92. D161 provides a ligand contact to Zn(2+). E193 acts as the Proton acceptor in catalysis. E194 contributes to the Zn(2+) binding site.

Belongs to the peptidase M20A family. Zn(2+) serves as cofactor.

Its subcellular location is the secreted. The polypeptide is Probable carboxypeptidase ATEG_02905 (Aspergillus terreus (strain NIH 2624 / FGSC A1156)).